The sequence spans 104 residues: L-rhamnose mutarotase (104 aa).

Substrate is bound at residue Tyr-18. His-22 functions as the Proton donor in the catalytic mechanism. Substrate is bound by residues Tyr-41 and 76 to 77 (WW).

This sequence belongs to the rhamnose mutarotase family. As to quaternary structure, homodimer.

Its subcellular location is the cytoplasm. It catalyses the reaction alpha-L-rhamnose = beta-L-rhamnose. The protein operates within carbohydrate metabolism; L-rhamnose metabolism. Functionally, involved in the anomeric conversion of L-rhamnose. This is L-rhamnose mutarotase from Listeria monocytogenes serovar 1/2a (strain ATCC BAA-679 / EGD-e).